Reading from the N-terminus, the 85-residue chain is UPF0386 protein Meso_1721 (85 aa).

It belongs to the UPF0386 family.

The protein is UPF0386 protein Meso_1721 of Chelativorans sp. (strain BNC1).